Consider the following 242-residue polypeptide: MSKQPENSFSSDKFFPIKQKLALEAVALVEPGMCVGLGSGSTAREFILALGDRVRTERLVITAVASSRISQLLAEAVGIPLSDHSLLQDVDLVVDGADEVDPCLRMIKGGGGALFREKILLQSGKRNVILVDERKLVPTLGKFSLPIEIAPFGCSSVQRILNKQGYFGEWRETSAGERFITDNGNYIYDVRTPDSYANPEEDMIRLLQIRGIIDVGFVIAKAEVWVGYADGSIVRKKEHNEY.

Residues 39 to 42 (SGST), 95 to 98 (DGAD), and 108 to 111 (KGGG) contribute to the substrate site. Residue glutamate 117 is the Proton acceptor of the active site. Residue lysine 135 participates in substrate binding.

This sequence belongs to the ribose 5-phosphate isomerase family. Homodimer.

The enzyme catalyses aldehydo-D-ribose 5-phosphate = D-ribulose 5-phosphate. Its pathway is carbohydrate degradation; pentose phosphate pathway; D-ribose 5-phosphate from D-ribulose 5-phosphate (non-oxidative stage): step 1/1. Functionally, catalyzes the reversible conversion of ribose-5-phosphate to ribulose 5-phosphate. The sequence is that of Ribose-5-phosphate isomerase A from Chlamydia trachomatis serovar D (strain ATCC VR-885 / DSM 19411 / UW-3/Cx).